The sequence spans 369 residues: Cytokine receptor common subunit gamma (369 aa).

An N-terminal signal peptide occupies residues 1 to 22 (MLKPSLPFTSLLFLQLPLLGVG). Residues 23–262 (LNTTILTPNG…ENPFLFALEA (240 aa)) are Extracellular-facing. Asn24, Asn71, Asn75, and Asn84 each carry an N-linked (GlcNAc...) asparagine glycan. A disulfide bridge links Cys62 with Cys72. A disulfide bridge links Cys102 with Cys115. The region spanning 156-253 (APENLTLHKL…IHWGSNTSKE (98 aa)) is the Fibronectin type-III domain. N-linked (GlcNAc...) asparagine glycosylation is present at Asn159. Residues Cys182 and Cys231 are joined by a disulfide bond. The short motif at 237–241 (WSEWS) is the WSXWS motif element. N-linked (GlcNAc...) asparagine glycosylation occurs at Asn249. Residues 263–283 (VVISVGSMGLIISLLCVYFWL) traverse the membrane as a helical segment. Over 284–369 (ERTMPRIPTL…PPCYTLKPET (86 aa)) the chain is Cytoplasmic. The Box 1 motif motif lies at 286–294 (TMPRIPTLK). Residue Thr292 is modified to Phosphothreonine.

Belongs to the type I cytokine receptor family. Type 5 subfamily. The gamma subunit is common to the IL2, IL4, IL7, IL15, IL21 and probably also the IL13 receptors. Interacts with SHB upon interleukin stimulation. Interacts with IL9. In terms of assembly, (Microbial infection) Interacts with HTLV-1 accessory protein p12I.

Its subcellular location is the cell membrane. The protein localises to the cell surface. Its function is as follows. Common subunit for the receptors for a variety of interleukins. Probably in association with IL15RA, involved in the stimulation of neutrophil phagocytosis by IL15. In Homo sapiens (Human), this protein is Cytokine receptor common subunit gamma (IL2RG).